The following is a 297-amino-acid chain: Polyketide transferase ATR5 (297 aa).

Residues 49–272 (DVAVWFQKRG…FVLAENKGHM (224 aa)) are abhydrolase domain.

The protein belongs to the polyketide transferase af380 family.

Its pathway is mycotoxin biosynthesis. In terms of biological role, polyketide transferase; part of the core atranone cluster (CAC) which products are predicted to catalyze most or all steps of atranone synthesis, starting from geranylgeranyl pyrophosphate (GGPP). The initial cyclization of GGPP to dolabellane is probably performed by the terpene cyclase ATR13. The Baeyer-Villiger oxidation near the end of the atranone synthesis, which converts atranones D and E to atranones F and G is predicted to be catalyzed by the monooxygenase ATR8. Of the CAC's other predicted gene products, the reducing PKS ATR6 might synthesize a polyketide chain. This polyketide is probably transferred onto the atranone backbone by the polyketide transferase ATR5. Other predicted CAC products include 4 oxygenases (ATR2, ATR3, ATR4, and ATR14), 3 short-chain reductases (ATR7, ATR9, and ATR10), and a methyltransferase (ATR12). These may all be involved in the various steps of atranone biosynthesis, although their specific roles must await experimental determination. The chain is Polyketide transferase ATR5 from Stachybotrys chlorohalonatus (strain IBT 40285).